Reading from the N-terminus, the 105-residue chain is ATP synthase subunit c (105 aa).

3 consecutive transmembrane segments (helical) span residues 3-23, 32-52, and 78-98; these read FLSLFFLALAGVAFAHDGGMG, SILGAMIGLGIAAFGGAIGMG, and VAMAMIEAQVIYTLVFAIIAI.

The protein belongs to the ATPase C chain family. F-type ATPases have 2 components, F(1) - the catalytic core - and F(0) - the membrane proton channel. F(1) has five subunits: alpha(3), beta(3), gamma(1), delta(1), epsilon(1). F(0) has three main subunits: a(1), b(2) and c(10-14). The alpha and beta chains form an alternating ring which encloses part of the gamma chain. F(1) is attached to F(0) by a central stalk formed by the gamma and epsilon chains, while a peripheral stalk is formed by the delta and b chains.

It is found in the cell inner membrane. Functionally, f(1)F(0) ATP synthase produces ATP from ADP in the presence of a proton or sodium gradient. F-type ATPases consist of two structural domains, F(1) containing the extramembraneous catalytic core and F(0) containing the membrane proton channel, linked together by a central stalk and a peripheral stalk. During catalysis, ATP synthesis in the catalytic domain of F(1) is coupled via a rotary mechanism of the central stalk subunits to proton translocation. Key component of the F(0) channel; it plays a direct role in translocation across the membrane. A homomeric c-ring of between 10-14 subunits forms the central stalk rotor element with the F(1) delta and epsilon subunits. This Helicobacter pylori (strain Shi470) protein is ATP synthase subunit c.